Consider the following 902-residue polypeptide: Cytosolic 10-formyltetrahydrofolate dehydrogenase (902 aa).

The hydrolase domain stretch occupies residues M1–A310. S9 bears the Phosphoserine mark. K38 bears the N6-succinyllysine mark. Q88 to I90 is a (6R)-10-formyltetrahydrofolate binding site. The Proton donor role is filled by H106. D142 provides a ligand contact to (6R)-10-formyltetrahydrofolate. The Carrier domain occupies E318–L395. S354 carries the O-(pantetheine 4'-phosphoryl)serine modification. An aldehyde dehydrogenase domain region spans residues T417 to Y902. NADP(+)-binding positions include I571–W573 and K597–Q600. Phosphoserine is present on residues S629 and S631. NADP(+)-binding positions include G630–Q635 and G650–S651. K660 is modified (N6-succinyllysine). E673 acts as the Proton acceptor in catalysis. E673–L674 provides a ligand contact to NADP(+). C707 (proton donor) is an active-site residue. An NADP(+)-binding site is contributed by K757. Position 767 is an N6-succinyllysine (K767). E804–F806 contacts NADP(+). Phosphoserine is present on S825. K882 is modified (N6-acetyllysine).

This sequence in the N-terminal section; belongs to the GART family. It in the C-terminal section; belongs to the aldehyde dehydrogenase family. ALDH1L subfamily. Homotetramer. Post-translationally, phosphopantetheinylation at Ser-354 by AASDHPPT is required for the formyltetrahydrofolate dehydrogenase activity.

Its subcellular location is the cytoplasm. The protein resides in the cytosol. It carries out the reaction (6R)-10-formyltetrahydrofolate + NADP(+) + H2O = (6S)-5,6,7,8-tetrahydrofolate + CO2 + NADPH + H(+). Functionally, cytosolic 10-formyltetrahydrofolate dehydrogenase that catalyzes the NADP(+)-dependent conversion of 10-formyltetrahydrofolate to tetrahydrofolate and carbon dioxide. May also have an NADP(+)-dependent aldehyde dehydrogenase activity towards formaldehyde, acetaldehyde, propionaldehyde, and benzaldehyde. This Pongo abelii (Sumatran orangutan) protein is Cytosolic 10-formyltetrahydrofolate dehydrogenase.